A 379-amino-acid polypeptide reads, in one-letter code: Succinyl-diaminopimelate desuccinylase (379 aa).

Histidine 70 is a Zn(2+) binding site. Aspartate 72 is a catalytic residue. Position 103 (aspartate 103) interacts with Zn(2+). Residue glutamate 137 is the Proton acceptor of the active site. Zn(2+)-binding residues include glutamate 138, glutamate 166, and histidine 352.

This sequence belongs to the peptidase M20A family. DapE subfamily. In terms of assembly, homodimer. Zn(2+) is required as a cofactor. It depends on Co(2+) as a cofactor.

The enzyme catalyses N-succinyl-(2S,6S)-2,6-diaminopimelate + H2O = (2S,6S)-2,6-diaminopimelate + succinate. It functions in the pathway amino-acid biosynthesis; L-lysine biosynthesis via DAP pathway; LL-2,6-diaminopimelate from (S)-tetrahydrodipicolinate (succinylase route): step 3/3. In terms of biological role, catalyzes the hydrolysis of N-succinyl-L,L-diaminopimelic acid (SDAP), forming succinate and LL-2,6-diaminopimelate (DAP), an intermediate involved in the bacterial biosynthesis of lysine and meso-diaminopimelic acid, an essential component of bacterial cell walls. This is Succinyl-diaminopimelate desuccinylase from Burkholderia ambifaria (strain MC40-6).